Consider the following 187-residue polypeptide: MRCISPTALVTFCAGFCISNPVLAQGLEAGVGPRADCEVCKEFLDRFYNSLLSRGIDFSADTIEKELLNFCSDAKGKENRLCYYLGATTDAATKILGEVTRPMSVHIPAVKICEKLKKMDSQICELKYGKKLDLASVDLWKMRVAELKQILQRWGEECRACAEKSDYVNLIRELAPKYVEIYPQTEL.

The first 24 residues, 1–24 (MRCISPTALVTFCAGFCISNPVLA), serve as a signal peptide directing secretion. 3 disulfides stabilise this stretch: C37-C124, C40-C113, and C71-C82.

This sequence belongs to the ARMET family. As to expression, expressed at high levels in the heart, skeletal muscle, testis and brain (at protein level). In the brain, detected in the cerebral cortex neurons through layers II to VI. In the hippocampus, detected in the CA1 to CA3 pyramidal regions and in the granule and polymorph layers of dentate gyrus. Weak expression in the striatum. In substantia nigra, detected in solitary cells that did not express tyrosine hydroxylase, a marker for dopaminergic neurons. Relatively high expression in the Purkinje cells of the cerebellum and in regions of the brain stem, including the locus coeruleus.

The protein resides in the secreted. Its function is as follows. Trophic factor for dopamine neurons. Prevents the 6-hydroxydopamine (6-OHDA)-induced degeneration of dopaminergic neurons. When administered after 6-OHDA-lesioning, restores the dopaminergic function and prevents the degeneration of dopaminergic neurons in substantia nigra. This chain is Cerebral dopamine neurotrophic factor (Cdnf), found in Mus musculus (Mouse).